A 499-amino-acid polypeptide reads, in one-letter code: CD-NTase-associated protein 4 (499 aa).

Residues 1–226 (MATSVLANWH…DFRFDGAARA (226 aa)) form an N-terminal endonuclease domain region. Active-site residues include D49 and Q72. Mg(2+) is bound at residue D49. Mg(2+) is bound at residue I73. K74 is an active-site residue. The segment at 258-464 (FRNVALRSFS…HIFSAAPNAV (207 aa)) is C-terminal SAVED domain.

This sequence belongs to the Cap4 nuclease family. A monomer in the absence of ligand, in its presence it forms oligomers. Requires Mg(2+) as cofactor.

With respect to regulation, DNase activity is activated upon ligand binding (cAAG). Inhibited by EDTA. Functionally, effector DNase of a CBASS antivirus system. CBASS (cyclic oligonucleotide-based antiphage signaling system) provides immunity against bacteriophages. The CD-NTase protein (CdnD) synthesizes cyclic nucleotides in response to infection; these serve as specific second messenger signals. The signals activate a diverse range of effectors, leading to bacterial cell death and thus abortive phage infection. A type II-C(AAG) CBASS system. Its function is as follows. Binds second messenger 3',3',3'-cyclic AMP-AMP-GMP (cAAG). In the presence of cAAG (synthesized by the cognate CD-NTase protein in the CBASS operon), endonucleolytically degrades dsDNA to approximately 17 bp length fragments, with a preference for 5'-C|NG sites. Only binds DNA in the presence of cAAG. Not activated by c-di-AMP, c-di-GMP, 3',3'-cyclic GMP-AMP (cGAMP) or the second messenger of A.baumanii strain ATCC 27244. In terms of biological role, protects E.coli against phage T2 infection. When the cdnD-cap2-cap3-cap4 operon is introduced in E.coli there is a more than 10(3) decrease in the efficiency of T2 plaque formation. The operon does not protect against phage T5 and only about 10-fold against T7. Expression of cdnD-cap4 alone protects E.coli against phage T2 infection. The sequence is that of CD-NTase-associated protein 4 from Enterobacter hormaechei subsp. hoffmannii (strain UCI 50).